Consider the following 200-residue polypeptide: 3-isopropylmalate dehydratase small subunit (200 aa).

It belongs to the LeuD family. LeuD type 1 subfamily. Heterodimer of LeuC and LeuD.

The enzyme catalyses (2R,3S)-3-isopropylmalate = (2S)-2-isopropylmalate. It functions in the pathway amino-acid biosynthesis; L-leucine biosynthesis; L-leucine from 3-methyl-2-oxobutanoate: step 2/4. Its function is as follows. Catalyzes the isomerization between 2-isopropylmalate and 3-isopropylmalate, via the formation of 2-isopropylmaleate. In Serratia proteamaculans (strain 568), this protein is 3-isopropylmalate dehydratase small subunit.